Consider the following 247-residue polypeptide: Ribonuclease 3 (247 aa).

The RNase III domain occupies 5–147 (LIALQERLQH…LIGAVYLDAG (143 aa)). Glutamate 40 is a binding site for Mg(2+). Aspartate 44 is an active-site residue. The interval 104 to 124 (QRRSRRRCADELQPDEAGSGG) is disordered. Mg(2+) is bound by residues aspartate 133 and glutamate 136. Glutamate 136 is a catalytic residue. Residues 174-244 (DAKTALQEWL…AAAMLATLKA (71 aa)) enclose the DRBM domain.

Belongs to the ribonuclease III family. As to quaternary structure, homodimer. Mg(2+) is required as a cofactor.

The protein localises to the cytoplasm. The catalysed reaction is Endonucleolytic cleavage to 5'-phosphomonoester.. In terms of biological role, digests double-stranded RNA. Involved in the processing of primary rRNA transcript to yield the immediate precursors to the large and small rRNAs (23S and 16S). Processes some mRNAs, and tRNAs when they are encoded in the rRNA operon. Processes pre-crRNA and tracrRNA of type II CRISPR loci if present in the organism. The protein is Ribonuclease 3 of Verminephrobacter eiseniae (strain EF01-2).